The primary structure comprises 595 residues: Wee1-like protein kinase 1-B (595 aa).

Residues 1-17 (MNVQPRNMNVQPRNMNV) show a composition bias toward polar residues. Positions 1-127 (MNVQPRNMNV…CPGTPPHKTF (127 aa)) are disordered. Residues 111–122 (PTSPIPECPGTP) show a composition bias toward pro residues. Phosphothreonine; by cdk1 is present on Thr186. One can recognise a Protein kinase domain in the interval 248-518 (FHELEKIGSG…SVALVKHSVL (271 aa)). Residues 254–262 (IGSGEFGSV) and Lys277 contribute to the ATP site. Catalysis depends on Asp375, which acts as the Proton acceptor. Mg(2+) contacts are provided by Asn380 and Asp412. Positions 526-563 (AEQLRIELDAEKFKNALLQKELKKAQIAKAAAEERAHF) form a coiled coil.

Belongs to the protein kinase superfamily. Ser/Thr protein kinase family. WEE1 subfamily. Interacts (when phosphorylated at Thr-186) with pin1. Post-translationally, phosphorylation at Thr-186 during M-phase by cdk1 inhibits the kinase activity and leads to interaction with pin1. In terms of tissue distribution, zygotically expressed. Present in oocytes and postgastrula embryos (at least until the tailbud stage). Expression begins at the midblastula stage and increases after the early gastrula stage.

It is found in the nucleus. The enzyme catalyses L-tyrosyl-[protein] + ATP = O-phospho-L-tyrosyl-[protein] + ADP + H(+). Its function is as follows. Acts as a zygotic negative regulator of entry into mitosis (G2 to M transition) by protecting the nucleus from cytoplasmically activated cyclin B1-complexed cdk1 before the onset of mitosis by mediating phosphorylation of cdk1 on 'Tyr-15'. Specifically phosphorylates and inactivates cyclin B1-complexed cdk1 reaching a maximum during G2 phase and a minimum as cells enter M phase. Phosphorylation of cyclin B1-cdk1 occurs exclusively on 'Tyr-15' and phosphorylation of monomeric cdk1 does not occur. This chain is Wee1-like protein kinase 1-B (wee1-b), found in Xenopus laevis (African clawed frog).